The following is a 198-amino-acid chain: dITP/XTP pyrophosphatase (198 aa).

10 to 15 contributes to the substrate binding site; sequence SGSDHK. 2 residues coordinate Mg(2+): E43 and D72. D72 serves as the catalytic Proton acceptor. Substrate contacts are provided by residues S73, 154–157, K177, and 182–183; these read FGYD and HR.

Belongs to the HAM1 NTPase family. In terms of assembly, homodimer. Mg(2+) serves as cofactor.

The enzyme catalyses XTP + H2O = XMP + diphosphate + H(+). It catalyses the reaction dITP + H2O = dIMP + diphosphate + H(+). It carries out the reaction ITP + H2O = IMP + diphosphate + H(+). Pyrophosphatase that catalyzes the hydrolysis of nucleoside triphosphates to their monophosphate derivatives, with a high preference for the non-canonical purine nucleotides XTP (xanthosine triphosphate), dITP (deoxyinosine triphosphate) and ITP. Seems to function as a house-cleaning enzyme that removes non-canonical purine nucleotides from the nucleotide pool, thus preventing their incorporation into DNA/RNA and avoiding chromosomal lesions. The chain is dITP/XTP pyrophosphatase from Leptospira biflexa serovar Patoc (strain Patoc 1 / Ames).